A 320-amino-acid polypeptide reads, in one-letter code: MYETRDLTGNAGKPVDTNPWPNNSKIAVSFVVNYEEGGERSLLYEDEGFETFLTEAGLMPFPNRPVRERSIESCFEYGSRCGFWRILNLFKKHKVPFTCWAIGQAVEKNPVVVGAMEEAGCEVGSHSHRWINYEGVPPETEYEHIKKSVQAIQKASPSNSAPRSWYTGRASLNTRKLVCQVYKDLGLPQPFDSDEYNDDYPYWVADPLASKPGAEDDKGLLIVPYTLEVNDMKYAVAPGFCNSDDFYTYARDAFDVLYEEGLEGAPKMMTIGLHCRLTGRPGRFRGLQKLMEHITSKEGVWVATREQIAQAWSAKHPYKA.

In terms of domain architecture, NodB homology spans 69–303; the sequence is RSIESCFEYG…ITSKEGVWVA (235 aa).

It belongs to the polysaccharide deacetylase family. As to quaternary structure, homodimer.

It is found in the prospore. In terms of biological role, may deacetylate chitin. Required for spore formation. In Schizosaccharomyces pombe (strain 972 / ATCC 24843) (Fission yeast), this protein is Putative polysaccharide deacetylase.